Here is a 249-residue protein sequence, read N- to C-terminus: Microvitellogenin (249 aa).

The N-terminal stretch at 1–17 (MLRTTVVLLTLAAIAFA) is a signal peptide.

Small vitellogenic protein found in females. It is synthesized in the fat body, secreted into the hemolymph, and taken up by developing oocytes. The chain is Microvitellogenin (MVG) from Manduca sexta (Tobacco hawkmoth).